The primary structure comprises 1206 residues: Methionine synthase (1206 aa).

The region spanning 1–314 (MRVTAANQHQ…DHIREVAAAV (314 aa)) is the Hcy-binding domain. Zn(2+)-binding residues include cysteine 233, cysteine 299, and cysteine 300. Positions 350–609 (VLMIGERTNA…IPEEQRQAAL (260 aa)) constitute a Pterin-binding domain. Positions 642 to 735 (REAELAKLPL…HMEKSDCDFG (94 aa)) constitute a B12-binding N-terminal domain. The 138-residue stretch at 740-877 (KGRIVLATVK…SAKRGEALAP (138 aa)) folds into the B12-binding domain. Methylcob(III)alamin is bound by residues 750–754 (GDVHD), histidine 753, serine 798, and alanine 856. A disordered region spans residues 873 to 925 (EALAPGSPESLAAEADRNKETERKARHERSKRIAVQRKAAEEPVEVPERSDVP). A compositionally biased stretch (basic and acidic residues) spans 886–897 (EADRNKETERKA). Over residues 898–907 (RHERSKRIAV) the composition is skewed to basic residues. The 300-residue stretch at 907–1206 (VQRKAAEEPV…HHPAAKYFNV (300 aa)) folds into the AdoMet activation domain. Positions 910-924 (KAAEEPVEVPERSDV) are enriched in basic and acidic residues. S-adenosyl-L-methionine-binding positions include aspartate 954, arginine 1149, and 1203–1204 (YF).

This sequence belongs to the vitamin-B12 dependent methionine synthase family. Methylcob(III)alamin serves as cofactor. Zn(2+) is required as a cofactor.

The enzyme catalyses (6S)-5-methyl-5,6,7,8-tetrahydrofolate + L-homocysteine = (6S)-5,6,7,8-tetrahydrofolate + L-methionine. The protein operates within amino-acid biosynthesis; L-methionine biosynthesis via de novo pathway; L-methionine from L-homocysteine (MetH route): step 1/1. Its function is as follows. Catalyzes the transfer of a methyl group from methyl-cobalamin to homocysteine, yielding enzyme-bound cob(I)alamin and methionine. Subsequently, remethylates the cofactor using methyltetrahydrofolate. The chain is Methionine synthase (metH) from Mycobacterium leprae (strain TN).